A 587-amino-acid polypeptide reads, in one-letter code: MPSYMAFTPYIMFSTNYAAIAYILISRCYRDSMLLDLQRITLEVNREMLRTGKKMNSLIRRMFFLKTFTLTYSCLSYILAVLVYQWRAQNWSNLFNGLLVNISLTILVVTTFFYFVSLMHVARGFDFVNQQLEDIVSSQSMDLKKKAHELRSLWALHSNLSNTARRINKHYGPQMLALRFDYFIFSVINCCIGTIYSNSDQESSFEKFFGSLLYWARSVDFFLNDYICNLVTEYQSQPKFFAPEGSMTNELSSYLIYESSTRLDLLVCGLYPVNKAKWLEMVASIVVHSIMLFQFHLVMRGGYTTLFSRTYALLANIITLTMLPIVMWQVRSVFLAKRHYPQLILITNDIRYTVSFLIILYTLLSRGFRDTALKEMQPLLLTLFREEKRCGYKGIDGVRRSLRILLFVKFFTLSWLCITDIIFLFYSSDAVIWVNIARFLFLSNTNNILEMVPMGYFLALWHIARGFDCVNRRLDQIVKSKSTRDQKELQHLWFLHTCLTKTALNINKIYAPQMLATRFDHFVIGVIQAYWGAVFTFDLSTSFLWVVYGSVQYHVRSLDYYLIDYMCDVAVEYHDSARHSWSEKECY.

Over 1-4 the chain is Cytoplasmic; that stretch reads MPSY. Residues 5-25 form a helical membrane-spanning segment; the sequence is MAFTPYIMFSTNYAAIAYILI. Residues 26–62 lie on the Extracellular side of the membrane; that stretch reads SRCYRDSMLLDLQRITLEVNREMLRTGKKMNSLIRRM. A helical membrane pass occupies residues 63 to 83; that stretch reads FFLKTFTLTYSCLSYILAVLV. The Cytoplasmic portion of the chain corresponds to 84 to 97; sequence YQWRAQNWSNLFNG. Residues 98–118 form a helical membrane-spanning segment; it reads LLVNISLTILVVTTFFYFVSL. Over 119–277 the chain is Extracellular; sequence MHVARGFDFV…CGLYPVNKAK (159 aa). The N-linked (GlcNAc...) asparagine glycan is linked to Asn159. Residues 278–298 form a helical membrane-spanning segment; it reads WLEMVASIVVHSIMLFQFHLV. The Cytoplasmic portion of the chain corresponds to 299–309; sequence MRGGYTTLFSR. Residues 310–330 form a helical membrane-spanning segment; the sequence is TYALLANIITLTMLPIVMWQV. At 331–403 the chain is on the extracellular side; that stretch reads RSVFLAKRHY…GIDGVRRSLR (73 aa). The helical transmembrane segment at 404-424 threads the bilayer; sequence ILLFVKFFTLSWLCITDIIFL. Residues 425–518 are Cytoplasmic-facing; it reads FYSSDAVIWV…IYAPQMLATR (94 aa). The chain crosses the membrane as a helical span at residues 519 to 539; it reads FDHFVIGVIQAYWGAVFTFDL. The Extracellular portion of the chain corresponds to 540-587; the sequence is STSFLWVVYGSVQYHVRSLDYYLIDYMCDVAVEYHDSARHSWSEKECY.

Belongs to the insect chemoreceptor superfamily. Gustatory receptor (GR) family. Gr22e subfamily.

The protein localises to the cell membrane. Probable gustatory receptor which mediates acceptance or avoidance behavior, depending on its substrates. This Drosophila erecta (Fruit fly) protein is Putative gustatory receptor 59b.